The sequence spans 817 residues: Protein EFR3 homolog B (817 aa).

Residues Ser212, Ser214, and Ser216 each carry the phosphoserine modification.

The protein belongs to the EFR3 family. In terms of assembly, component of a phosphatidylinositol 4-kinase (PI4K) complex, composed of PI4KA, EFR3 (EFR3A or EFR3B), TTC7 (TTC7A or TTC7B) and HYCC (HYCC1 or HYCC2). Post-translationally, palmitoylated at its N-terminus, anchoring the protein to the plasma membrane. As to expression, widely expressed.

It is found in the cell membrane. It localises to the cytoplasm. The protein resides in the cytosol. Its function is as follows. Component of a complex required to localize phosphatidylinositol 4-kinase (PI4K) to the plasma membrane. The complex acts as a regulator of phosphatidylinositol 4-phosphate (PtdIns(4)P) synthesis. In the complex, EFR3B probably acts as the membrane-anchoring component. Also involved in responsiveness to G-protein-coupled receptors; it is however unclear whether this role is direct or indirect. This is Protein EFR3 homolog B (Efr3b) from Mus musculus (Mouse).